A 117-amino-acid chain; its full sequence is Large ribosomal subunit protein uL22 (117 aa).

It belongs to the universal ribosomal protein uL22 family. As to quaternary structure, part of the 50S ribosomal subunit.

Functionally, this protein binds specifically to 23S rRNA; its binding is stimulated by other ribosomal proteins, e.g. L4, L17, and L20. It is important during the early stages of 50S assembly. It makes multiple contacts with different domains of the 23S rRNA in the assembled 50S subunit and ribosome. Its function is as follows. The globular domain of the protein is located near the polypeptide exit tunnel on the outside of the subunit, while an extended beta-hairpin is found that lines the wall of the exit tunnel in the center of the 70S ribosome. This chain is Large ribosomal subunit protein uL22, found in Lactobacillus gasseri (strain ATCC 33323 / DSM 20243 / BCRC 14619 / CIP 102991 / JCM 1131 / KCTC 3163 / NCIMB 11718 / NCTC 13722 / AM63).